Consider the following 92-residue polypeptide: uncharacterized protein (92 aa).

The disordered stretch occupies residues 1–92; the sequence is MSDAAAPAQA…PSPSQQQVAA (92 aa).

This is an uncharacterized protein from Caenorhabditis elegans.